A 140-amino-acid chain; its full sequence is UPF0336 protein TW736 (140 aa).

It belongs to the UPF0336 family.

The protein is UPF0336 protein TW736 of Tropheryma whipplei (strain TW08/27) (Whipple's bacillus).